The sequence spans 463 residues: MAPSATLPLTTAILAIGRLVAAQQPGTSTPEVHPKLTTYKCTTSGGCVAQDTSVVLDWNYRWMHDANYNSCTVNGGVNTTLCPDEATCGKNCYIEGVDYAASGVTASGSTLTLNQYMPSSSGGYSSVSPRLYLLGPDGEYVMLKLNGQELSFDVDLSALPCGENGSLYLSQMDENGGANQYNTAGANYGSGYCDAQCPVQTWRNGTLNTSGQGFCCNEMDILEGNSRANALTPHSCTATACDSAGCGFNPYGSGYPNYFGPGDTVDTSKTFTIITQFNTDNGSPSGNLVSITRKYRQNGVDIPSAKPGGDTISSCPSASAYGGLATMGKALSSGMVLVFSIWNDNSQYMNWLDSGRAGPCSSTEGNPSNILANNPGTHVVYSNIRWGDIGSTTNSTGGNPPPPPPPASSTTFSTTRRSSTTSSSPSCTQTHWGQCGGIGYTGCKTCTSGTTCQYGNDYYSQCL.

The first 22 residues, 1 to 22 (MAPSATLPLTTAILAIGRLVAA), serve as a signal peptide directing secretion. The interval 23-397 (QQPGTSTPEV…DIGSTTNSTG (375 aa)) is catalytic. Residues N78, N164, N204, and N208 are each glycosylated (N-linked (GlcNAc...) asparagine). E218 serves as the catalytic Nucleophile. E223 functions as the Proton donor in the catalytic mechanism. Positions 390-429 (GSTTNSTGGNPPPPPPPASSTTFSTTRRSSTTSSSPSCTQ) are disordered. A glycan (N-linked (GlcNAc...) asparagine) is linked at N394. The linker stretch occupies residues 402-427 (PPPPPASSTTFSTTRRSSTTSSSPSC). Positions 408-429 (SSTTFSTTRRSSTTSSSPSCTQ) are enriched in low complexity. The 37-residue stretch at 427–463 (CTQTHWGQCGGIGYTGCKTCTSGTTCQYGNDYYSQCL) folds into the CBM1 domain. 2 disulfides stabilise this stretch: C435/C452 and C446/C462.

This sequence belongs to the glycosyl hydrolase 7 (cellulase C) family.

It is found in the secreted. It carries out the reaction Endohydrolysis of (1-&gt;4)-beta-D-glucosidic linkages in cellulose, lichenin and cereal beta-D-glucans.. In terms of biological role, the biological conversion of cellulose to glucose generally requires three types of hydrolytic enzymes: (1) Endoglucanases which cut internal beta-1,4-glucosidic bonds; (2) Exocellobiohydrolases that cut the disaccharide cellobiose from the non-reducing end of the cellulose polymer chain; (3) Beta-1,4-glucosidases which hydrolyze the cellobiose and other short cello-oligosaccharides to glucose. In Trichoderma longibrachiatum, this protein is Endoglucanase EG-1 (egl1).